Consider the following 257-residue polypeptide: Tryptophan synthase alpha chain (257 aa).

Active-site proton acceptor residues include E44 and D55.

It belongs to the TrpA family. In terms of assembly, tetramer of two alpha and two beta chains.

It catalyses the reaction (1S,2R)-1-C-(indol-3-yl)glycerol 3-phosphate + L-serine = D-glyceraldehyde 3-phosphate + L-tryptophan + H2O. It functions in the pathway amino-acid biosynthesis; L-tryptophan biosynthesis; L-tryptophan from chorismate: step 5/5. In terms of biological role, the alpha subunit is responsible for the aldol cleavage of indoleglycerol phosphate to indole and glyceraldehyde 3-phosphate. This chain is Tryptophan synthase alpha chain, found in Chlamydia caviae (strain ATCC VR-813 / DSM 19441 / 03DC25 / GPIC) (Chlamydophila caviae).